A 352-amino-acid chain; its full sequence is 4-hydroxy-3-methylbut-2-en-1-yl diphosphate synthase (flavodoxin) (352 aa).

The [4Fe-4S] cluster site is built by C263, C266, C298, and E305.

It belongs to the IspG family. The cofactor is [4Fe-4S] cluster.

The enzyme catalyses (2E)-4-hydroxy-3-methylbut-2-enyl diphosphate + oxidized [flavodoxin] + H2O + 2 H(+) = 2-C-methyl-D-erythritol 2,4-cyclic diphosphate + reduced [flavodoxin]. Its pathway is isoprenoid biosynthesis; isopentenyl diphosphate biosynthesis via DXP pathway; isopentenyl diphosphate from 1-deoxy-D-xylulose 5-phosphate: step 5/6. Functionally, converts 2C-methyl-D-erythritol 2,4-cyclodiphosphate (ME-2,4cPP) into 1-hydroxy-2-methyl-2-(E)-butenyl 4-diphosphate. The chain is 4-hydroxy-3-methylbut-2-en-1-yl diphosphate synthase (flavodoxin) from Sulfurimonas denitrificans (strain ATCC 33889 / DSM 1251) (Thiomicrospira denitrificans (strain ATCC 33889 / DSM 1251)).